Reading from the N-terminus, the 147-residue chain is Myosin regulatory light chain (147 aa).

Residue Thr1 is modified to N-acetylthreonine. EF-hand domains follow at residues 2–37 (ASADQIQECFQIFDKDNDGKVSIEELGSALRSLGKN), 73–108 (EQSKEMLDAFRALDKEGNGTIQEAELRQLLLNLGDA), and 109–144 (LTSSEVEELMKEVSVSGDGAINYESFVDMLVTGYPL). Positions 15, 17, 19, 21, 26, 86, 90, 92, and 97 each coordinate Ca(2+).

This Physarum polycephalum (Slime mold) protein is Myosin regulatory light chain.